A 267-amino-acid chain; its full sequence is 3-methyl-2-oxobutanoate hydroxymethyltransferase (267 aa).

D46 and D85 together coordinate Mg(2+). 3-methyl-2-oxobutanoate-binding positions include 46 to 47 (DS), D85, and K115. Mg(2+) is bound at residue E117. The active-site Proton acceptor is the E184.

The protein belongs to the PanB family. As to quaternary structure, homodecamer; pentamer of dimers. Mg(2+) serves as cofactor.

The protein resides in the cytoplasm. It carries out the reaction 3-methyl-2-oxobutanoate + (6R)-5,10-methylene-5,6,7,8-tetrahydrofolate + H2O = 2-dehydropantoate + (6S)-5,6,7,8-tetrahydrofolate. The protein operates within cofactor biosynthesis; (R)-pantothenate biosynthesis; (R)-pantoate from 3-methyl-2-oxobutanoate: step 1/2. Catalyzes the reversible reaction in which hydroxymethyl group from 5,10-methylenetetrahydrofolate is transferred onto alpha-ketoisovalerate to form ketopantoate. This is 3-methyl-2-oxobutanoate hydroxymethyltransferase from Geotalea daltonii (strain DSM 22248 / JCM 15807 / FRC-32) (Geobacter daltonii).